The primary structure comprises 540 residues: Homoserine O-acetyltransferase (540 aa).

The 339-residue stretch at 66–404 folds into the AB hydrolase-1 domain; sequence NVILICHALT…QHGHDAFLLE (339 aa). The active-site Nucleophile is Ser171. Arg240 serves as a coordination point for substrate. The tract at residues 262-284 is disordered; sequence QDTDKSGIKGTTGTEGKNSSEIS. Catalysis depends on residues Asp365 and His398. Residue Asp399 participates in substrate binding. CBS domains lie at 425-484 and 486-540; these read MNRN…ELDE and ITRD…GKYD.

Belongs to the AB hydrolase superfamily. MetX family. In terms of assembly, homodimer.

Its subcellular location is the cytoplasm. It catalyses the reaction L-homoserine + acetyl-CoA = O-acetyl-L-homoserine + CoA. It functions in the pathway amino-acid biosynthesis; L-methionine biosynthesis via de novo pathway; O-acetyl-L-homoserine from L-homoserine: step 1/1. Transfers an acetyl group from acetyl-CoA to L-homoserine, forming acetyl-L-homoserine. In vitro, can also use propionyl-CoA or butiryl-CoA as acyl donor. The chain is Homoserine O-acetyltransferase from Methanosarcina acetivorans (strain ATCC 35395 / DSM 2834 / JCM 12185 / C2A).